Reading from the N-terminus, the 481-residue chain is Aspartyl/glutamyl-tRNA(Asn/Gln) amidotransferase subunit B (481 aa).

Residues 29–50 (SSSKSSHTDPKNTNISPIDLGH) form a disordered region.

It belongs to the GatB/GatE family. GatB subfamily. In terms of assembly, heterotrimer of A, B and C subunits.

It catalyses the reaction L-glutamyl-tRNA(Gln) + L-glutamine + ATP + H2O = L-glutaminyl-tRNA(Gln) + L-glutamate + ADP + phosphate + H(+). The enzyme catalyses L-aspartyl-tRNA(Asn) + L-glutamine + ATP + H2O = L-asparaginyl-tRNA(Asn) + L-glutamate + ADP + phosphate + 2 H(+). In terms of biological role, allows the formation of correctly charged Asn-tRNA(Asn) or Gln-tRNA(Gln) through the transamidation of misacylated Asp-tRNA(Asn) or Glu-tRNA(Gln) in organisms which lack either or both of asparaginyl-tRNA or glutaminyl-tRNA synthetases. The reaction takes place in the presence of glutamine and ATP through an activated phospho-Asp-tRNA(Asn) or phospho-Glu-tRNA(Gln). This chain is Aspartyl/glutamyl-tRNA(Asn/Gln) amidotransferase subunit B, found in Malacoplasma penetrans (strain HF-2) (Mycoplasma penetrans).